The sequence spans 228 residues: Orotate phosphoribosyltransferase (228 aa).

Residues Arg107, Lys108, Lys111, and 133–141 contribute to the 5-phospho-alpha-D-ribose 1-diphosphate site; that span reads EDLTTDGGS. Residue Thr137 participates in orotate binding.

The protein belongs to the purine/pyrimidine phosphoribosyltransferase family. PyrE subfamily. In terms of assembly, homodimer. Mg(2+) is required as a cofactor.

The catalysed reaction is orotidine 5'-phosphate + diphosphate = orotate + 5-phospho-alpha-D-ribose 1-diphosphate. It functions in the pathway pyrimidine metabolism; UMP biosynthesis via de novo pathway; UMP from orotate: step 1/2. Functionally, catalyzes the transfer of a ribosyl phosphate group from 5-phosphoribose 1-diphosphate to orotate, leading to the formation of orotidine monophosphate (OMP). The polypeptide is Orotate phosphoribosyltransferase (Jannaschia sp. (strain CCS1)).